The chain runs to 37 residues: MKVRASVKTMCEKCKIVKRNGVVRNICTNPKHKQRQG.

It belongs to the bacterial ribosomal protein bL36 family.

The chain is Large ribosomal subunit protein bL36 from Dehalococcoides mccartyi (strain ATCC BAA-2266 / KCTC 15142 / 195) (Dehalococcoides ethenogenes (strain 195)).